The primary structure comprises 401 residues: Dynactin subunit 2 (401 aa).

Residues 1–25 (MADPKYADLPGIARNEPDVYETSDL) form a disordered region. Alanine 2 bears the N-acetylalanine mark. Tyrosine 6 carries the post-translational modification Phosphotyrosine. Serine 83 carries the phosphoserine modification. Tyrosine 86 carries the post-translational modification Phosphotyrosine. Residues 99-132 (PQQKYQRLLHEVQELTTEVEKIKTTVKESATEEK) adopt a coiled-coil conformation. 2 positions are modified to phosphothreonine: threonine 134 and threonine 198. A coiled-coil region spans residues 214-244 (EQDKFSQAAKVAELEKRLTELETAVRCDQDA). Residue serine 320 is modified to Phosphoserine. A coiled-coil region spans residues 379 to 399 (RENLATVEGNFASIDERMKKL).

This sequence belongs to the dynactin subunit 2 family. In terms of assembly, subunit of dynactin, a multiprotein complex part of a tripartite complex with dynein and a adapter, such as BICDL1, BICD2 or HOOK3. The dynactin complex is built around ACTR1A/ACTB filament and consists of an actin-related filament composed of a shoulder domain, a pointed end and a barbed end. Its length is defined by its flexible shoulder domain. The soulder is composed of 2 DCTN1 subunits, 4 DCTN2 and 2 DCTN3. The 4 DCNT2 (via N-terminus) bind the ACTR1A filament and act as molecular rulers to determine the length. The pointed end is important for binding dynein-dynactin cargo adapters and consists of 4 subunits: ACTR10, DCNT4, DCTN5 and DCTN6. The barbed end is composed of a CAPZA1:CAPZB heterodimers, which binds ACTR1A/ACTB filament and dynactin and stabilizes dynactin. Interacts with BICD2 and CEP135. Interacts with DYNAP. Interacts with ECPAS. Interacts with MAPRE1.

The protein localises to the cytoplasm. The protein resides in the cytoskeleton. It localises to the microtubule organizing center. Its subcellular location is the centrosome. It is found in the membrane. Its function is as follows. Part of the dynactin complex that activates the molecular motor dynein for ultra-processive transport along microtubules. In the dynactin soulder domain, binds the ACTR1A filament and acts as a molecular ruler to determine the length. Modulates cytoplasmic dynein binding to an organelle, and plays a role in prometaphase chromosome alignment and spindle organization during mitosis. Involved in anchoring microtubules to centrosomes. May play a role in synapse formation during brain development. This is Dynactin subunit 2 from Homo sapiens (Human).